The sequence spans 1384 residues: RRP12-like protein (1384 aa).

Residues 1-13 show a composition bias toward basic residues; the sequence is MGKFRSKLKRNGK. Positions 1–32 are disordered; it reads MGKFRSKLKRNGKGKTWSRGESATSNPTQMKH. Residues 19 to 29 show a composition bias toward polar residues; sequence RGESATSNPTQ. 7 positions are modified to phosphoserine: serine 82, serine 85, serine 96, serine 1094, serine 1095, serine 1117, and serine 1119. Disordered regions lie at residues 1082-1102, 1114-1155, and 1176-1384; these read LRKK…LVSG, LADS…IRED, and SAQT…KKYK. Composition is skewed to acidic residues over residues 1090-1099 and 1114-1127; these read AQEDSSDDEL and LADS…DMDA. Residues 1176 to 1191 are compositionally biased toward polar residues; sequence SAQTATPAQSQKTKAQ. Phosphoserine is present on residues serine 1221, serine 1225, serine 1227, serine 1230, serine 1250, and serine 1251. 2 stretches are compositionally biased toward polar residues: residues 1276–1285 and 1297–1315; these read SGKTTASSRY and TAGN…TSRP. A compositionally biased stretch (basic and acidic residues) spans 1321–1334; sequence GSKKAKGDMKKSGK. The segment covering 1348-1362 has biased composition (basic residues); the sequence is LNKRKRSMNSRKFKS. Gly residues predominate over residues 1369-1378; it reads AENGGAGGGR.

This sequence belongs to the RRP12 family.

Its subcellular location is the nucleus. The polypeptide is RRP12-like protein (Drosophila melanogaster (Fruit fly)).